The sequence spans 395 residues: Ribose-phosphate pyrophosphokinase 2, chloroplastic (395 aa).

Positions 1 to 23 (MASPAPRSLSSSSSSSSSSFCPS) are enriched in low complexity. The segment at 1-33 (MASPAPRSLSSSSSSSSSSFCPSISPPPRSPSR) is disordered. Residues 1–42 (MASPAPRSLSSSSSSSSSSFCPSISPPPRSPSRASLPFSVKC) constitute a chloroplast transit peptide. D209, H211, D220, and D224 together coordinate Mg(2+). Residues 295-310 (GKVAVMLDDMIDTAGT) form a binding of phosphoribosylpyrophosphate region.

This sequence belongs to the ribose-phosphate pyrophosphokinase family.

It is found in the plastid. It localises to the chloroplast. The enzyme catalyses D-ribose 5-phosphate + ATP = 5-phospho-alpha-D-ribose 1-diphosphate + AMP + H(+). The polypeptide is Ribose-phosphate pyrophosphokinase 2, chloroplastic (PRS2) (Spinacia oleracea (Spinach)).